Here is a 55-residue protein sequence, read N- to C-terminus: Large ribosomal subunit protein bL33 (55 aa).

The protein belongs to the bacterial ribosomal protein bL33 family.

In Deinococcus deserti (strain DSM 17065 / CIP 109153 / LMG 22923 / VCD115), this protein is Large ribosomal subunit protein bL33.